Here is a 127-residue protein sequence, read N- to C-terminus: Holo-[acyl-carrier-protein] synthase (127 aa).

Positions 9 and 58 each coordinate Mg(2+).

Belongs to the P-Pant transferase superfamily. AcpS family. It depends on Mg(2+) as a cofactor.

The protein resides in the cytoplasm. The catalysed reaction is apo-[ACP] + CoA = holo-[ACP] + adenosine 3',5'-bisphosphate + H(+). Its function is as follows. Transfers the 4'-phosphopantetheine moiety from coenzyme A to a Ser of acyl-carrier-protein. The sequence is that of Holo-[acyl-carrier-protein] synthase from Shewanella baltica (strain OS223).